We begin with the raw amino-acid sequence, 92 residues long: Protein LSO2 (92 aa).

Composition is skewed to basic and acidic residues over residues 1 to 10 (MGKRFSESAA) and 38 to 72 (EASK…ERDA). The tract at residues 1–92 (MGKRFSESAA…KGGKGKRKMK (92 aa)) is disordered. Positions 17–80 (ARKRDQAHAK…DALLTAEEEQ (64 aa)) form a coiled coil.

It belongs to the CCDC124 family. Associates with translationally inactive ribosomes in the nonrotated state. LSO2 bridges the decoding sites of the small with the GTPase activating center (GAC) of the large subunit. This position allows accommodation of the DOM34-dependent ribosome recycling system, which splits LSO2-containing ribosomes.

The protein localises to the nucleus. It is found in the cytoplasm. Ribosome-binding protein involved in ribosome hibernation by associating with translationally inactive ribosomes. Required for translational recovery after starvation from stationary phase. May facilitate rapid translation reactivation by stabilizing the recycling-competent state of inactive ribosomes. This is Protein LSO2 from Saccharomyces cerevisiae (strain ATCC 204508 / S288c) (Baker's yeast).